The sequence spans 286 residues: Elongation factor Ts (286 aa).

The segment at 79–82 is involved in Mg(2+) ion dislocation from EF-Tu; the sequence is TDFV.

This sequence belongs to the EF-Ts family.

It is found in the cytoplasm. Associates with the EF-Tu.GDP complex and induces the exchange of GDP to GTP. It remains bound to the aminoacyl-tRNA.EF-Tu.GTP complex up to the GTP hydrolysis stage on the ribosome. This is Elongation factor Ts from Wolbachia sp. subsp. Drosophila simulans (strain wRi).